Consider the following 211-residue polypeptide: Imidazole glycerol phosphate synthase subunit HisH (211 aa).

Positions 3-211 (VVAVIDYEMG…VSQVREKIAA (209 aa)) constitute a Glutamine amidotransferase type-1 domain. Cys-81 serves as the catalytic Nucleophile. Active-site residues include His-186 and Glu-188.

Heterodimer of HisH and HisF.

The protein resides in the cytoplasm. It catalyses the reaction 5-[(5-phospho-1-deoxy-D-ribulos-1-ylimino)methylamino]-1-(5-phospho-beta-D-ribosyl)imidazole-4-carboxamide + L-glutamine = D-erythro-1-(imidazol-4-yl)glycerol 3-phosphate + 5-amino-1-(5-phospho-beta-D-ribosyl)imidazole-4-carboxamide + L-glutamate + H(+). The enzyme catalyses L-glutamine + H2O = L-glutamate + NH4(+). It participates in amino-acid biosynthesis; L-histidine biosynthesis; L-histidine from 5-phospho-alpha-D-ribose 1-diphosphate: step 5/9. In terms of biological role, IGPS catalyzes the conversion of PRFAR and glutamine to IGP, AICAR and glutamate. The HisH subunit catalyzes the hydrolysis of glutamine to glutamate and ammonia as part of the synthesis of IGP and AICAR. The resulting ammonia molecule is channeled to the active site of HisF. The sequence is that of Imidazole glycerol phosphate synthase subunit HisH from Trichormus variabilis (strain ATCC 29413 / PCC 7937) (Anabaena variabilis).